Reading from the N-terminus, the 198-residue chain is MELPDPVRQRLGNFSRAVFSDSNRTGPESNEGPENEMVSSLALQMSLYFNTYYFPLWWVSSIMMLHMKYSILPDYYKFIVITVIILITLIEAIRLYLGYVGNLQEKVPELAGFWLLSLLLQLPLILFLLFNEGLTNLPLEKAIHIIFTLFLAFQVVAAFLTLRKMVNQLAVRFHLQDFDRLSANRGDMRRMRSCIEEI.

N-linked (GlcNAc...) asparagine glycosylation is found at N13 and N23. 4 helical membrane passes run 45 to 65 (MSLY…IMML), 78 to 98 (FIVI…LYLG), 110 to 130 (LAGF…FLLF), and 142 to 162 (AIHI…FLTL).

This sequence belongs to the TMEM17 family. In terms of assembly, part of the tectonic-like complex (also named B9 complex).

It is found in the cell projection. Its subcellular location is the cilium membrane. Functionally, transmembrane component of the tectonic-like complex, a complex localized at the transition zone of primary cilia and acting as a barrier that prevents diffusion of transmembrane proteins between the cilia and plasma membranes. Required for ciliogenesis and sonic hedgehog/SHH signaling. The chain is Transmembrane protein 17 (TMEM17) from Homo sapiens (Human).